A 276-amino-acid polypeptide reads, in one-letter code: MSDLKTMIENAWDNRDSISPSTVSVEVKQAIIDALDLLDSGAARVAEKISGEWVVHQWLKKAVLLSFRIRENQAMDDGVNQFYDKVPLKFSDYTPEQFKQGGMRVVPNAVARKGSFVGKNVVLMPSYVNIGAYVDDGTMVDTWATVGSCAQIGKNVHLSGGVGIGGVLEPLQANPTIIEDNCFIGARSEIVEGVIVEEGAVISMGVYISQSTRIYDRETGEIHYGRVPAGAVVVPGALPSKDGSHSLYAAIIVKKVDQQTREKVGINALLRSIDDE.

2 residues coordinate substrate: R104 and D141.

Belongs to the transferase hexapeptide repeat family. As to quaternary structure, homotrimer.

It localises to the cytoplasm. It catalyses the reaction (S)-2,3,4,5-tetrahydrodipicolinate + succinyl-CoA + H2O = (S)-2-succinylamino-6-oxoheptanedioate + CoA. Its pathway is amino-acid biosynthesis; L-lysine biosynthesis via DAP pathway; LL-2,6-diaminopimelate from (S)-tetrahydrodipicolinate (succinylase route): step 1/3. In Pseudoalteromonas translucida (strain TAC 125), this protein is 2,3,4,5-tetrahydropyridine-2,6-dicarboxylate N-succinyltransferase.